The sequence spans 427 residues: Phosphoribosylamine--glycine ligase (427 aa).

One can recognise an ATP-grasp domain in the interval 107–312; sequence KDLCARFNIP…LLALVNAAVD (206 aa). Position 133–193 (133–193) interacts with ATP; sequence IRQQGAPIVV…EEFLDGEEAS (61 aa). The Mg(2+) site is built by Glu-282 and Asn-284.

This sequence belongs to the GARS family. The cofactor is Mg(2+). Mn(2+) is required as a cofactor.

It catalyses the reaction 5-phospho-beta-D-ribosylamine + glycine + ATP = N(1)-(5-phospho-beta-D-ribosyl)glycinamide + ADP + phosphate + H(+). It participates in purine metabolism; IMP biosynthesis via de novo pathway; N(1)-(5-phospho-D-ribosyl)glycinamide from 5-phospho-alpha-D-ribose 1-diphosphate: step 2/2. This chain is Phosphoribosylamine--glycine ligase, found in Brucella melitensis biotype 1 (strain ATCC 23456 / CCUG 17765 / NCTC 10094 / 16M).